Here is a 378-residue protein sequence, read N- to C-terminus: Ribosomal RNA large subunit methyltransferase G (378 aa).

The protein belongs to the methyltransferase superfamily. RlmG family.

It localises to the cytoplasm. The enzyme catalyses guanosine(1835) in 23S rRNA + S-adenosyl-L-methionine = N(2)-methylguanosine(1835) in 23S rRNA + S-adenosyl-L-homocysteine + H(+). Its function is as follows. Specifically methylates the guanine in position 1835 (m2G1835) of 23S rRNA. The chain is Ribosomal RNA large subunit methyltransferase G from Salmonella dublin (strain CT_02021853).